A 72-amino-acid chain; its full sequence is SRY-related protein AES4 (72 aa).

Positions 1–69 (VKRPMNAFMV…KHMADYPDYK (69 aa)) form a DNA-binding region, HMG box.

Its subcellular location is the nucleus. The chain is SRY-related protein AES4 from Alligator mississippiensis (American alligator).